A 192-amino-acid polypeptide reads, in one-letter code: Orotate phosphoribosyltransferase (192 aa).

Position 116 to 124 (116 to 124 (EDIVTTGLS)) interacts with 5-phospho-alpha-D-ribose 1-diphosphate. Residues Thr120 and Arg148 each coordinate orotate.

It belongs to the purine/pyrimidine phosphoribosyltransferase family. PyrE subfamily. As to quaternary structure, homodimer. Mg(2+) serves as cofactor.

The catalysed reaction is orotidine 5'-phosphate + diphosphate = orotate + 5-phospho-alpha-D-ribose 1-diphosphate. Its pathway is pyrimidine metabolism; UMP biosynthesis via de novo pathway; UMP from orotate: step 1/2. Catalyzes the transfer of a ribosyl phosphate group from 5-phosphoribose 1-diphosphate to orotate, leading to the formation of orotidine monophosphate (OMP). The protein is Orotate phosphoribosyltransferase of Brucella anthropi (strain ATCC 49188 / DSM 6882 / CCUG 24695 / JCM 21032 / LMG 3331 / NBRC 15819 / NCTC 12168 / Alc 37) (Ochrobactrum anthropi).